Reading from the N-terminus, the 676-residue chain is DNA ligase (676 aa).

NAD(+) is bound by residues 34–38 (DAEYD), 84–85 (SL), and Glu116. Lys118 serves as the catalytic N6-AMP-lysine intermediate. NAD(+) contacts are provided by Arg139, Glu174, Lys294, and Lys318. Cys412, Cys415, Cys428, and Cys433 together coordinate Zn(2+). Residues 589 to 676 (KGGEALKGLT…RTGKKAEELV (88 aa)) enclose the BRCT domain.

It belongs to the NAD-dependent DNA ligase family. LigA subfamily. Mg(2+) serves as cofactor. It depends on Mn(2+) as a cofactor.

It catalyses the reaction NAD(+) + (deoxyribonucleotide)n-3'-hydroxyl + 5'-phospho-(deoxyribonucleotide)m = (deoxyribonucleotide)n+m + AMP + beta-nicotinamide D-nucleotide.. Functionally, DNA ligase that catalyzes the formation of phosphodiester linkages between 5'-phosphoryl and 3'-hydroxyl groups in double-stranded DNA using NAD as a coenzyme and as the energy source for the reaction. It is essential for DNA replication and repair of damaged DNA. This is DNA ligase from Thermus thermophilus (strain ATCC 27634 / DSM 579 / HB8).